A 220-amino-acid polypeptide reads, in one-letter code: Large ribosomal subunit protein eL15 (220 aa).

This sequence belongs to the eukaryotic ribosomal protein eL15 family.

This chain is Large ribosomal subunit protein eL15, found in Staphylothermus marinus (strain ATCC 43588 / DSM 3639 / JCM 9404 / F1).